A 248-amino-acid polypeptide reads, in one-letter code: 5'-nucleotidase SurE (248 aa).

A divalent metal cation-binding residues include D8, D9, S39, and N91.

It belongs to the SurE nucleotidase family. A divalent metal cation serves as cofactor.

Its subcellular location is the cytoplasm. The enzyme catalyses a ribonucleoside 5'-phosphate + H2O = a ribonucleoside + phosphate. Its function is as follows. Nucleotidase that shows phosphatase activity on nucleoside 5'-monophosphates. The sequence is that of 5'-nucleotidase SurE from Shewanella amazonensis (strain ATCC BAA-1098 / SB2B).